The chain runs to 274 residues: Elongation factor Ts (274 aa).

The tract at residues threonine 79–valine 82 is involved in Mg(2+) ion dislocation from EF-Tu.

The protein belongs to the EF-Ts family.

It localises to the cytoplasm. Its function is as follows. Associates with the EF-Tu.GDP complex and induces the exchange of GDP to GTP. It remains bound to the aminoacyl-tRNA.EF-Tu.GTP complex up to the GTP hydrolysis stage on the ribosome. This Porphyromonas gingivalis (strain ATCC 33277 / DSM 20709 / CIP 103683 / JCM 12257 / NCTC 11834 / 2561) protein is Elongation factor Ts.